Reading from the N-terminus, the 671-residue chain is UvrABC system protein B (671 aa).

A Helicase ATP-binding domain is found at 25 to 178 (EGIKKGYKHQ…DAMLKKLVEI (154 aa)). 38–45 (GVTGSGKT) provides a ligand contact to ATP. Residues 91–114 (YYDYYQPEAYIPETDTYIEKDALI) carry the Beta-hairpin motif. One can recognise a Helicase C-terminal domain in the interval 435–601 (QVEDLLEEIH…TVKSKIKDIL (167 aa)). Residues 626–661 (EETIKKLEQEMKHAAENLEFEKAAEIRDKIFKIKEK) enclose the UVR domain.

Belongs to the UvrB family. As to quaternary structure, forms a heterotetramer with UvrA during the search for lesions. Interacts with UvrC in an incision complex.

Its subcellular location is the cytoplasm. In terms of biological role, the UvrABC repair system catalyzes the recognition and processing of DNA lesions. A damage recognition complex composed of 2 UvrA and 2 UvrB subunits scans DNA for abnormalities. Upon binding of the UvrA(2)B(2) complex to a putative damaged site, the DNA wraps around one UvrB monomer. DNA wrap is dependent on ATP binding by UvrB and probably causes local melting of the DNA helix, facilitating insertion of UvrB beta-hairpin between the DNA strands. Then UvrB probes one DNA strand for the presence of a lesion. If a lesion is found the UvrA subunits dissociate and the UvrB-DNA preincision complex is formed. This complex is subsequently bound by UvrC and the second UvrB is released. If no lesion is found, the DNA wraps around the other UvrB subunit that will check the other stand for damage. This chain is UvrABC system protein B, found in Thermodesulfovibrio yellowstonii (strain ATCC 51303 / DSM 11347 / YP87).